The primary structure comprises 541 residues: Ankyrin repeat domain-containing protein 13C (541 aa).

A compositionally biased stretch (basic and acidic residues) spans 1-20 (MTGEKIRSLRRDHKPSKEEG). A disordered region spans residues 1-27 (MTGEKIRSLRRDHKPSKEEGDLLEPGD). ANK repeat units follow at residues 111–142 (PAHY…QKDN), 143–172 (HGNT…PVKV), and 176–205 (QGWS…QQSR). A Phosphoserine modification is found at Ser-411.

It localises to the endoplasmic reticulum membrane. Functionally, acts as a molecular chaperone for G protein-coupled receptors, regulating their biogenesis and exit from the ER. In Homo sapiens (Human), this protein is Ankyrin repeat domain-containing protein 13C (ANKRD13C).